We begin with the raw amino-acid sequence, 147 residues long: Transthyretin (147 aa).

An N-terminal signal peptide occupies residues 1–20 (MASFRLFLLCLAGLVFVSEA). C30 is subject to Sulfocysteine. Residue K35 participates in L-thyroxine binding. E62 bears the 4-carboxyglutamate mark. At S72 the chain carries Phosphoserine. E74 provides a ligand contact to L-thyroxine. N118 carries an N-linked (GlcNAc...) asparagine glycan. S137 provides a ligand contact to L-thyroxine.

This sequence belongs to the transthyretin family. Homotetramer. Dimer of dimers. In the homotetramer, subunits assemble around a central channel that can accommodate two ligand molecules. Interacts with RBP4. In terms of processing, sulfonation of the reactive cysteine Cys-30 enhances the stability of the native conformation of TTR, avoiding misassembly of the protein leading to amyloid formation. As to expression, detected in serum (at protein level).

The protein resides in the secreted. Its function is as follows. Thyroid hormone-binding protein. Probably transports thyroxine from the bloodstream to the brain. The protein is Transthyretin (TTR) of Bos taurus (Bovine).